We begin with the raw amino-acid sequence, 802 residues long: Putative transcriptional regulator cudA (802 aa).

Disordered stretches follow at residues 1–148, 154–173, 381–446, and 636–658; these read MNQS…PSAI, ISNN…NLLL, NNIN…NNEN, and QPQQ…QQGQ. Over residues 25–63 the composition is skewed to low complexity; the sequence is NNNNNGNNGMMMNQQQMQQHVVPHLHHLQQQQQQPQQQQ. Over residues 69-88 the composition is skewed to polar residues; the sequence is DYSNSPNGTTNGSTMSPNCI. Over residues 89–128 the composition is skewed to low complexity; sequence NTNNNNNNNNNNNNNSNNNNNNNNNASNNLTSNKSSSTNT. Residues 129–142 are compositionally biased toward polar residues; the sequence is PQIGQLQASPANLT. A compositionally biased stretch (low complexity) spans 381-445; the sequence is NNINNNNNIN…CNNNNNNNNE (65 aa).

As to expression, expressed in the prestalk cells that constitute the slug tip (pstA cells) and in prespore cells (at protein level). Not expressed in the band of prestalk cells that lies behind the slug tip (pstO cells). Highly expressed in pstO derived papilla cells during culmination.

The protein localises to the nucleus. It is found in the nucleoplasm. Functionally, essential for normal culmination. May function as a transcriptional regulator. This Dictyostelium discoideum (Social amoeba) protein is Putative transcriptional regulator cudA (cudA).